The chain runs to 115 residues: Probable prefoldin subunit 1 (115 aa).

It belongs to the prefoldin subunit beta family. Heterohexamer of two PFD-alpha type and four PFD-beta type subunits.

Functionally, binds specifically to cytosolic chaperonin (c-CPN) and transfers target proteins to it. Binds to nascent polypeptide chain and promotes folding in an environment in which there are many competing pathways for nonnative proteins. This chain is Probable prefoldin subunit 1 (pfdn1), found in Dictyostelium discoideum (Social amoeba).